A 270-amino-acid polypeptide reads, in one-letter code: Putative phosphoenolpyruvate synthase regulatory protein (270 aa).

150 to 157 (GVSRCGKT) provides a ligand contact to ADP.

Belongs to the pyruvate, phosphate/water dikinase regulatory protein family. PSRP subfamily.

It carries out the reaction [pyruvate, water dikinase] + ADP = [pyruvate, water dikinase]-phosphate + AMP + H(+). It catalyses the reaction [pyruvate, water dikinase]-phosphate + phosphate + H(+) = [pyruvate, water dikinase] + diphosphate. In terms of biological role, bifunctional serine/threonine kinase and phosphorylase involved in the regulation of the phosphoenolpyruvate synthase (PEPS) by catalyzing its phosphorylation/dephosphorylation. The chain is Putative phosphoenolpyruvate synthase regulatory protein from Aeromonas salmonicida (strain A449).